The following is a 178-amino-acid chain: Large ribosomal subunit protein uL6 (178 aa).

The tract at residues 159–178 (GKGIRYEGEHVRRKEGKTGK) is disordered.

The protein belongs to the universal ribosomal protein uL6 family. In terms of assembly, part of the 50S ribosomal subunit.

Its function is as follows. This protein binds to the 23S rRNA, and is important in its secondary structure. It is located near the subunit interface in the base of the L7/L12 stalk, and near the tRNA binding site of the peptidyltransferase center. The protein is Large ribosomal subunit protein uL6 of Listeria monocytogenes serotype 4b (strain CLIP80459).